Consider the following 122-residue polypeptide: Co-chaperonin GroES (122 aa).

It belongs to the GroES chaperonin family. As to quaternary structure, heptamer of 7 subunits arranged in a ring. Interacts with the chaperonin GroEL.

It is found in the cytoplasm. Its function is as follows. Together with the chaperonin GroEL, plays an essential role in assisting protein folding. The GroEL-GroES system forms a nano-cage that allows encapsulation of the non-native substrate proteins and provides a physical environment optimized to promote and accelerate protein folding. GroES binds to the apical surface of the GroEL ring, thereby capping the opening of the GroEL channel. The chain is Co-chaperonin GroES from Aquifex aeolicus (strain VF5).